A 137-amino-acid polypeptide reads, in one-letter code: Ribosomal RNA small subunit methyltransferase G (137 aa).

S-adenosyl-L-methionine is bound by residues G75, F80, and 126-127 (AE).

It belongs to the methyltransferase superfamily. RNA methyltransferase RsmG family.

It localises to the cytoplasm. Functionally, specifically methylates the N7 position of a guanine in 16S rRNA. This is Ribosomal RNA small subunit methyltransferase G from Mycoplasma mycoides subsp. mycoides SC (strain CCUG 32753 / NCTC 10114 / PG1).